A 98-amino-acid chain; its full sequence is Large ribosomal subunit protein uL23 (98 aa).

The protein belongs to the universal ribosomal protein uL23 family. As to quaternary structure, part of the 50S ribosomal subunit. Contacts protein L29, and trigger factor when it is bound to the ribosome.

One of the early assembly proteins it binds 23S rRNA. One of the proteins that surrounds the polypeptide exit tunnel on the outside of the ribosome. Forms the main docking site for trigger factor binding to the ribosome. The polypeptide is Large ribosomal subunit protein uL23 (Clostridium kluyveri (strain NBRC 12016)).